The chain runs to 118 residues: UPF0344 protein RBAM_010920 (118 aa).

4 consecutive transmembrane segments (helical) span residues 4-24 (WHIT…GLYG), 33-53 (ITHM…AELF), 62-82 (EYAG…MLVI), and 93-113 (LWIG…HLPI).

The protein belongs to the UPF0344 family.

The protein resides in the cell membrane. The polypeptide is UPF0344 protein RBAM_010920 (Bacillus velezensis (strain DSM 23117 / BGSC 10A6 / LMG 26770 / FZB42) (Bacillus amyloliquefaciens subsp. plantarum)).